A 98-amino-acid polypeptide reads, in one-letter code: Large ribosomal subunit protein uL23 (98 aa).

It belongs to the universal ribosomal protein uL23 family. In terms of assembly, part of the 50S ribosomal subunit. Contacts protein L29, and trigger factor when it is bound to the ribosome.

In terms of biological role, one of the early assembly proteins it binds 23S rRNA. One of the proteins that surrounds the polypeptide exit tunnel on the outside of the ribosome. Forms the main docking site for trigger factor binding to the ribosome. This is Large ribosomal subunit protein uL23 from Cellvibrio japonicus (strain Ueda107) (Pseudomonas fluorescens subsp. cellulosa).